We begin with the raw amino-acid sequence, 448 residues long: Protease Do-like 8, chloroplastic (448 aa).

The segment at 152–333 (EGNGSGVVWD…IPSSTVLKIV (182 aa)) is serine protease. Residues His-171, Asp-214, and Ser-292 each act as charge relay system in the active site. The PDZ domain occupies 336–433 (LIQFSKVLRA…DKVTLKIKRG (98 aa)).

It belongs to the peptidase S1C family.

Its subcellular location is the plastid. It localises to the chloroplast thylakoid lumen. Functionally, probable serine protease. This is Protease Do-like 8, chloroplastic (DEGP8) from Arabidopsis thaliana (Mouse-ear cress).